The sequence spans 37 residues: Large ribosomal subunit protein bL36c (37 aa).

It belongs to the bacterial ribosomal protein bL36 family.

Its subcellular location is the plastid. The protein resides in the chloroplast. This is Large ribosomal subunit protein bL36c from Gnetum parvifolium (Small-leaved jointfir).